Here is a 262-residue protein sequence, read N- to C-terminus: MWITQEITPYLRKEYTIEAKLLDVRSEHNILEIFKSKDFGEIAMLNRQLLFKNFLHIESELLAHMGGCTKKELKEVLIVDGFDLELAHQLFKYDTHIDFVQADEKILDSFISFFPHFHEVKNNKNFTHAKQLLDLDIKKYDLILCLQEPDIHKIDGLKRMLKEDGVFISVAKHPLLEHVSMQNALKNLGDFFAVAMPFVAPLRILSNKGYIYASFKTHPLKDLMAPKIEALTSVRYYNEDIHRAAFALPKNLQEVFKDNIKS.

The PABS domain maps to 1-249 (MWITQEITPY…DIHRAAFALP (249 aa)). N29 provides a ligand contact to S-methyl-5'-thioadenosine. D83 contacts spermidine. The active-site Proton acceptor is D155.

This sequence belongs to the spermidine/spermine synthase family. Homodimer or homotetramer.

It localises to the cytoplasm. The catalysed reaction is S-adenosyl 3-(methylsulfanyl)propylamine + putrescine = S-methyl-5'-thioadenosine + spermidine + H(+). It functions in the pathway amine and polyamine biosynthesis; spermidine biosynthesis; spermidine from putrescine: step 1/1. In terms of biological role, catalyzes the irreversible transfer of a propylamine group from the amino donor S-adenosylmethioninamine (decarboxy-AdoMet) to putrescine (1,4-diaminobutane) to yield spermidine. In Helicobacter pylori (strain G27), this protein is Polyamine aminopropyltransferase.